A 296-amino-acid chain; its full sequence is Cytoplasmic envelopment protein 1 (296 aa).

It belongs to the herpesviridae cytoplasmic envelopment protein 1 family. In terms of assembly, interacts with UL51; this interaction allows incorporation of UL7 within the virion.

It is found in the virion. It localises to the virion tegument. The protein localises to the host cytoplasm. The protein resides in the host Golgi apparatus. In terms of biological role, plays a critical role in cytoplasmic virus egress. Participates in the final step of tegumentation and envelope acquisition within the host cytoplasm. The chain is Cytoplasmic envelopment protein 1 (UL7) from Human herpesvirus 1 (strain 17) (HHV-1).